The sequence spans 190 residues: Elongation factor P (190 aa).

It belongs to the elongation factor P family.

Its subcellular location is the cytoplasm. It functions in the pathway protein biosynthesis; polypeptide chain elongation. Functionally, involved in peptide bond synthesis. Stimulates efficient translation and peptide-bond synthesis on native or reconstituted 70S ribosomes in vitro. Probably functions indirectly by altering the affinity of the ribosome for aminoacyl-tRNA, thus increasing their reactivity as acceptors for peptidyl transferase. The chain is Elongation factor P from Amoebophilus asiaticus (strain 5a2).